We begin with the raw amino-acid sequence, 412 residues long: Allantoate amidohydrolase (412 aa).

Zn(2+)-binding residues include His84, Asp95, Glu130, and His193. Arg218, Asn278, and Arg291 together coordinate allantoate. His385 lines the Zn(2+) pocket.

This sequence belongs to the peptidase M20 family. In terms of assembly, homodimer. It depends on Zn(2+) as a cofactor.

The protein resides in the cytoplasm. It carries out the reaction allantoate + H2O + 2 H(+) = (S)-2-ureidoglycine + NH4(+) + CO2. It functions in the pathway nitrogen metabolism; (S)-allantoin degradation. In terms of biological role, involved in the anaerobic nitrogen utilization via the assimilation of allantoin. Catalyzes specifically the hydrolysis of allantoate to yield CO2, NH3 and S-ureidoglycine, which is unstable and readily undergoes a second deamination by S-ureidoglycine aminohydrolase AllE to yield S-ureidoglycolate and NH3. The polypeptide is Allantoate amidohydrolase (Bacillus subtilis (strain 168)).